The following is a 770-amino-acid chain: Amyloid-beta precursor protein (770 aa).

Positions M1–A17 are cleaved as a signal peptide. Residues L18–A701 are Extracellular-facing. The GFLD subdomain stretch occupies residues L28 to V123. Positions L28–L189 constitute an E1 domain. Cystine bridges form between C38–C62, C73–C117, C98–C105, C133–C187, C144–C174, and C158–C186. Residue N96–H110 coordinates heparin. The interval D131–L189 is cuBD subdomain. Residues H147, H151, and Y168 each coordinate Cu(2+). The tract at residues G181–P188 is zinc-binding. Zn(2+) contacts are provided by E183, C186, and C187. Residues S193 to D207 are compositionally biased toward acidic residues. The interval S193 to E284 is disordered. S198 carries the phosphoserine; by CK2 modification. A Phosphoserine; by CK1 modification is found at S206. Sulfotyrosine is present on residues Y217 and Y262. Positions V228–E264 are enriched in acidic residues. Positions R268–E281 are enriched in low complexity. 3 cysteine pairs are disulfide-bonded: C291–C341, C300–C324, and C316–C337. One can recognise a BPTI/Kunitz inhibitor domain in the interval C291–C341. Residue Y336 is modified to Sulfotyrosine. Residues V344–P365 carry the OX-2 motif. In terms of domain architecture, E2 spans A374 to L565. Positions F391 to L423 are heparin-binding. S441 is subject to Phosphoserine. The segment at F491–K522 is heparin-binding. The residue at position 497 (Y497) is a Phosphotyrosine. Residues A523–R540 are collagen-binding. N-linked (GlcNAc...) asparagine glycans are attached at residues N542 and N571. Cu(2+) contacts are provided by H677 and H685. Residues H677 and H685 each coordinate Zn(2+). Residues V695–M722 form an interaction with PSEN1 region. The helical transmembrane segment at I702 to M722 threads the bilayer. The Cytoplasmic segment spans residues L723–N770. Residues K724–G734 carry the Basolateral sorting signal motif. T729 is modified (phosphothreonine). Phosphoserine; by APP-kinase I is present on S730. The interval H732–K751 is interaction with G(o)-alpha. Phosphothreonine; by CDK5 and MAPK10 and LRRK2 is present on T743. Positions G756–N770 are interaction with DAB2. The segment at G756 to N770 is required for the interaction with KIF5B and for anterograde transport in axons. Y757 carries the post-translational modification Phosphotyrosine; by ABL1. Residues Y757 to Y762 carry the YENPXY motif; contains endocytosis signal motif. Residue K763 forms a Glycyl lysine isopeptide (Lys-Gly) (interchain with G-Cter in ubiquitin) linkage.

Belongs to the APP family. In terms of assembly, binds, via its C-terminus, to the PID domain of several cytoplasmic proteins, including APBB family members, the APBA family, MAPK8IP1, SHC1, NUMB and DAB1. Binding to DAB1 inhibits its serine phosphorylation. Interacts (via NPXY motif) with DAB2 (via PID domain); the interaction is impaired by tyrosine phosphorylation of the NPXY motif. Also interacts with GPCR-like protein BPP, APPBP1, IB1, KNS2 (via its TPR domains), APPBP2 (via BaSS) and DDB1. In vitro, it binds MAPT via the MT-binding domains. Associates with microtubules in the presence of ATP and in a kinesin-dependent manner. Interacts, through a C-terminal domain, with GNAO1. Amyloid-beta protein 42 binds CHRNA7 in hippocampal neurons. Amyloid-beta associates with HADH2. Interacts with ANKS1B and AGER. Interacts with CPEB1. Interacts with ITM2B. Interacts with ITM2C. Interacts with IDE. Can form homodimers; dimerization is enhanced in the presence of Cu(2+) ions. Can form homodimers; this is promoted by heparin binding. Amyloid-beta protein 40 interacts with S100A9. CTF-alpha product of APP interacts with GSAP. Isoform APP695 interacts with SORL1 (via N-terminal ectodomain); this interaction retains APP in the trans-Golgi network and reduces processing into soluble APP-alpha and amyloid-beta peptides. The C99 fragment also interacts with SORL1. Isoform APP751 interacts with SORL1. Isoform APP770 interacts with SORL1. Interacts with PLD3. Interacts with VDAC1. Interacts with NSG1; could regulate APP processing. Amyloid-beta protein 42 interacts with FPR2. Interacts with SYT7. Interacts (via transmembrane region) with PSEN1; the interaction is direct. Interacts with LRRK2. Interacts (via cytoplasmic domain) with KIF5B. Interacts (via C-terminus) with APBB2/FE65L1 (via C-terminus). Interacts (via intracellular domain) with APBB3. Proteolytically processed under normal cellular conditions. Cleavage either by alpha-secretase, beta-secretase or theta-secretase leads to generation and extracellular release of soluble APP peptides, S-APP-alpha and S-APP-beta, and the retention of corresponding membrane-anchored C-terminal fragments, C80, C83 and C99. Subsequent processing of C80 and C83 by gamma-secretase yields P3 peptides. This is the major secretory pathway and is non-amyloidogenic. Alternatively, presenilin/nicastrin-mediated gamma-secretase processing of C99 releases the amyloid-beta proteins, amyloid-beta protein 40 and amyloid-beta protein 42, major components of amyloid plaques, and the cytotoxic C-terminal fragments, gamma-CTF(50), gamma-CTF(57) and gamma-CTF(59). PSEN1 cleavage is more efficient with C83 than with C99 as substrate (in vitro). Amyloid-beta protein 40 and Amyloid-beta protein 42 are cleaved by ACE. Many other minor amyloid-beta peptides, amyloid-beta 1-X peptides, are found in cerebral spinal fluid (CSF) including the amyloid-beta X-15 peptides, produced from the cleavage by alpha-secretase. Post-translationally, proteolytically cleaved by caspases during neuronal apoptosis. Cleavage at Asp-739 by either CASP6, CASP8 or CASP9 results in the production of the neurotoxic C31 peptide and the increased production of amyloid-beta peptides. In terms of processing, N- and O-glycosylated. Phosphorylation in the C-terminal on tyrosine, threonine and serine residues is neuron-specific. Phosphorylation can affect APP processing, neuronal differentiation and interaction with other proteins. Phosphorylated on Thr-743 in neuronal cells by Cdc5 kinase and Mapk10, in dividing cells by Cdc2 kinase in a cell-cycle dependent manner with maximal levels at the G2/M phase and, in vitro, by GSK-3-beta. The Thr-743 phosphorylated form causes a conformational change which reduces binding of Fe65 family members. In dopaminergic (DA) neurons, phosphorylation on Thr-743 by LRKK2 promotes the production and the nuclear translocation of the APP intracellular domain (AICD) which induces DA neuron apoptosis. Phosphorylation on Tyr-757 is required for SHC binding. Phosphorylated in the extracellular domain by casein kinases on both soluble and membrane-bound APP. This phosphorylation is inhibited by heparin. Post-translationally, extracellular binding and reduction of copper, results in a corresponding oxidation of Cys-144 and Cys-158, and the formation of a disulfide bond. In terms of processing, trophic-factor deprivation triggers the cleavage of surface APP by beta-secretase to release sAPP-beta which is further cleaved to release an N-terminal fragment of APP (N-APP). Amyloid-beta peptides are degraded by IDE. Post-translationally, sulfated on tyrosine residues. Expressed in the brain with expression in cortex, cerebellum, hippocampus, olfactory bulb, neurons, astrocytes and microglia (at protein level). Expressed in the retinal lens. Expressed at a low level in muscle cells (at protein level). In terms of tissue distribution, expressed in kidney. As to expression, widely expressed. Expressed in several different brain regions including hippocampus, substantia nigra pars compacta and cerebellum. Within the cerebellum, abundantly expressed in Purkinje cells. Expressed in the brain, kidney and liver. Expressed in several different brain regions including hippocampus, substantia nigra pars compacta and cerebellum. Within the cerebellum, abundantly expressed in Purkinje cells. In terms of tissue distribution, expressed in several different brain regions including hippocampus, substantia nigra pars compacta and cerebellum. Within the cerebellum, abundantly expressed in Purkinje cells.

It localises to the cell membrane. Its subcellular location is the membrane. It is found in the perikaryon. The protein resides in the cell projection. The protein localises to the growth cone. It localises to the clathrin-coated pit. Its subcellular location is the early endosome. It is found in the cytoplasmic vesicle. The protein resides in the golgi apparatus. The protein localises to the trans-Golgi network. It localises to the endoplasmic reticulum. Its subcellular location is the secreted. It is found in the cell surface. The protein resides in the nucleus. The protein localises to the cytoplasm. Its function is as follows. Functions as a cell surface receptor and performs physiological functions on the surface of neurons relevant to neurite growth, neuronal adhesion and axonogenesis. Interaction between APP molecules on neighboring cells promotes synaptogenesis. Involved in cell mobility and transcription regulation through protein-protein interactions. Can promote transcription activation through binding to APBB1-KAT5 and inhibit Notch signaling through interaction with Numb. Couples to apoptosis-inducing pathways such as those mediated by G(o) and JIP. Inhibits G(o)-alpha ATPase activity. Acts as a kinesin I membrane receptor, mediating the axonal transport of beta-secretase and presenilin 1. By acting as a kinesin I membrane receptor, plays a role in axonal anterograde transport of cargo towards synapses in axons. May be involved in copper homeostasis/oxidative stress through copper ion reduction. Can regulate neurite outgrowth through binding to components of the extracellular matrix such as heparin and collagen I and IV. The splice isoforms that contain the BPTI domain possess protease inhibitor activity. Induces a AGER-dependent pathway that involves activation of p38 MAPK, resulting in internalization of amyloid-beta peptide and leading to mitochondrial dysfunction in cultured cortical neurons. Provides Cu(2+) ions for GPC1 which are required for release of nitric oxide (NO) and subsequent degradation of the heparan sulfate chains on GPC1. Functionally, amyloid-beta peptides are lipophilic metal chelators with metal-reducing activity. Binds transient metals such as copper, zinc and iron. Rat and mouse amyloid-beta peptides bind only weakly transient metals and have little reducing activity due to substitutions of transient metal chelating residues. Amyloid-beta protein 42 may activate mononuclear phagocytes in the brain and elicit inflammatory responses. Promotes both tau aggregation and TPK II-mediated phosphorylation. Also binds GPC1 in lipid rafts. In terms of biological role, the gamma-CTF peptides as well as the caspase-cleaved peptides, including C31, are potent enhancers of neuronal apoptosis. The sequence is that of Amyloid-beta precursor protein from Mus musculus (Mouse).